Reading from the N-terminus, the 446-residue chain is Ribosomal protein uS12 methylthiotransferase RimO (446 aa).

An MTTase N-terminal domain is found at 4–119; that stretch reads YKVGMVSLGC…IDKVIKEFIE (116 aa). Residues cysteine 13, cysteine 48, cysteine 82, cysteine 157, cysteine 161, and cysteine 164 each contribute to the [4Fe-4S] cluster site. The 231-residue stretch at 143 to 373 folds into the Radical SAM core domain; the sequence is TTQKESAYIR…MLSQEKISND (231 aa). Residues 376 to 442 enclose the TRAM domain; it reads KLKVNKKYDI…DYDLIGVVED (67 aa).

It belongs to the methylthiotransferase family. RimO subfamily. [4Fe-4S] cluster is required as a cofactor.

Its subcellular location is the cytoplasm. It carries out the reaction L-aspartate(89)-[ribosomal protein uS12]-hydrogen + (sulfur carrier)-SH + AH2 + 2 S-adenosyl-L-methionine = 3-methylsulfanyl-L-aspartate(89)-[ribosomal protein uS12]-hydrogen + (sulfur carrier)-H + 5'-deoxyadenosine + L-methionine + A + S-adenosyl-L-homocysteine + 2 H(+). Functionally, catalyzes the methylthiolation of an aspartic acid residue of ribosomal protein uS12. This Clostridium botulinum (strain Eklund 17B / Type B) protein is Ribosomal protein uS12 methylthiotransferase RimO.